The primary structure comprises 334 residues: UDP-N-acetylglucosamine 4,6-dehydratase (inverting) (334 aa).

NADP(+)-binding positions include Thr-13–Phe-16, Ser-37–Lys-42, Asp-61–Val-62, Ala-81, Lys-85, and Leu-123–Ser-124. Lys-85 is a binding site for substrate. Lys-127 is an active-site residue. 2 residues coordinate NADP(+): Tyr-135 and Lys-139. Residue Asn-167 coordinates substrate. Val-168–Arg-172 contributes to the NADP(+) binding site. Substrate is bound by residues Val-175, Thr-193, Arg-252, and Glu-255.

The protein belongs to the polysaccharide synthase family. In terms of assembly, homohexamer. NADP(+) is required as a cofactor.

The enzyme catalyses UDP-N-acetyl-alpha-D-glucosamine = UDP-2-acetamido-2,6-dideoxy-beta-L-arabino-hex-4-ulose + H2O. Functionally, catalyzes the first step in the biosynthesis of pseudaminic acid, a sialic-acid-like sugar that is used to modify flagellin. Has both C6 dehydratase and C5 epimerase activities that result in the production of both UDP-2-acetamido-2,6-dideoxy-beta-L-arabino-4-hexulose and UDP-2-acetamido-2,6-dideoxy-alpha-D-xylo-4-hexulose. The chain is UDP-N-acetylglucosamine 4,6-dehydratase (inverting) (pseB) from Campylobacter jejuni subsp. jejuni serotype O:23/36 (strain 81-176).